Here is a 695-residue protein sequence, read N- to C-terminus: Probable rhamnogalacturonate lyase C (695 aa).

The N-terminal stretch at Met1–Ala21 is a signal peptide. N-linked (GlcNAc...) asparagine glycosylation is found at Asn28, Asn96, Asn118, Asn144, Asn199, Asn285, Asn532, and Asn638.

Belongs to the polysaccharide lyase 4 family.

The protein localises to the secreted. It catalyses the reaction Endotype eliminative cleavage of L-alpha-rhamnopyranosyl-(1-&gt;4)-alpha-D-galactopyranosyluronic acid bonds of rhamnogalacturonan I domains in ramified hairy regions of pectin leaving L-rhamnopyranose at the reducing end and 4-deoxy-4,5-unsaturated D-galactopyranosyluronic acid at the non-reducing end.. Pectinolytic enzymes consist of four classes of enzymes: pectin lyase, polygalacturonase, pectin methylesterase and rhamnogalacturonase. Degrades the rhamnogalacturonan I (RG-I) backbone of pectin. This is Probable rhamnogalacturonate lyase C (rglC) from Aspergillus oryzae (strain ATCC 42149 / RIB 40) (Yellow koji mold).